The chain runs to 346 residues: D-alanine--D-alanine ligase (346 aa).

The region spanning 133 to 327 is the ATP-grasp domain; it reads KLYAKSVGVK…ALADQISLEK (195 aa). An ATP-binding site is contributed by 159-211; it reads LSFPCIIKPARLGSSIGISIVKDEKDLEYAKDVGFEFDNDLVVEEFKNNIKEY. Mg(2+) contacts are provided by Asp-284, Glu-296, and Asn-298.

Belongs to the D-alanine--D-alanine ligase family. The cofactor is Mg(2+). It depends on Mn(2+) as a cofactor.

It is found in the cytoplasm. It carries out the reaction 2 D-alanine + ATP = D-alanyl-D-alanine + ADP + phosphate + H(+). Its pathway is cell wall biogenesis; peptidoglycan biosynthesis. In terms of biological role, cell wall formation. This is D-alanine--D-alanine ligase from Campylobacter jejuni subsp. jejuni serotype O:6 (strain 81116 / NCTC 11828).